The primary structure comprises 174 residues: Ribosome maturation factor RimM (174 aa).

In terms of domain architecture, PRC barrel spans Asp91 to Leu164.

The protein belongs to the RimM family. Binds ribosomal protein uS19.

The protein localises to the cytoplasm. Functionally, an accessory protein needed during the final step in the assembly of 30S ribosomal subunit, possibly for assembly of the head region. Essential for efficient processing of 16S rRNA. May be needed both before and after RbfA during the maturation of 16S rRNA. It has affinity for free ribosomal 30S subunits but not for 70S ribosomes. This Kineococcus radiotolerans (strain ATCC BAA-149 / DSM 14245 / SRS30216) protein is Ribosome maturation factor RimM.